The sequence spans 70 residues: Conotoxin Im23.3 (70 aa).

Positions 1-22 (MIMRMTLTLFVLVVMTAASASG) are cleaved as a signal peptide. The propeptide occupies 23–28 (DALTEA). 3 cysteine pairs are disulfide-bonded: Cys-34/Cys-41, Cys-45/Cys-53, and Cys-54/Cys-69.

The protein belongs to the conotoxin K superfamily. In terms of tissue distribution, expressed by the venom duct.

It is found in the secreted. Neurotoxin that induces excitatory symptoms in mice following intracranial administration. No symptoms are observed after intraperitoneal and intravenous (tail vein) injections. The polypeptide is Conotoxin Im23.3 (Conus imperialis (Imperial cone)).